Here is a 205-residue protein sequence, read N- to C-terminus: Calcium-binding allergen Bet v 3 (205 aa).

The tract at residues 1–26 (MPCSTEAMEKAGHGHASTPRKRSLSN) is disordered. 4 consecutive EF-hand domains span residues 36 to 71 (LNTLRLRRIFDLFDKNSDGIITVDELSRALNLLGLE), 72 to 107 (TDLSELESTVKSFTREGNIGLQFEDFISLHQSLNDS), 130 to 165 (QEEADSFGGFKVFDEDGDGYISARELQMVLGKLGFS), and 168 to 203 (SEIDRVEKMIVSVDSNRDGRVDFFEFKDMMRSVLVR). The Ca(2+) site is built by D49, N51, D53, and E60. Ca(2+)-binding residues include D143, D145, D147, Y149, E154, D181, N183, D185, R187, and E192.

Could be involved in calcium metabolism in pollen. Binds 3 calcium ions. The chain is Calcium-binding allergen Bet v 3 (BETVIII) from Betula pendula (European white birch).